The chain runs to 91 residues: YcgL domain-containing protein Sde_1339 (91 aa).

Positions 1 to 85 constitute a YcgL domain; that stretch reads MIVDIYRSAK…PPESYMNEIP (85 aa). The interval 72–91 is disordered; it reads QMPPPPESYMNEIPNDKMPR.

This is YcgL domain-containing protein Sde_1339 from Saccharophagus degradans (strain 2-40 / ATCC 43961 / DSM 17024).